Reading from the N-terminus, the 571-residue chain is Proline--tRNA ligase 1 (571 aa).

The protein belongs to the class-II aminoacyl-tRNA synthetase family. ProS type 1 subfamily. Homodimer.

The protein localises to the cytoplasm. It carries out the reaction tRNA(Pro) + L-proline + ATP = L-prolyl-tRNA(Pro) + AMP + diphosphate. In terms of biological role, catalyzes the attachment of proline to tRNA(Pro) in a two-step reaction: proline is first activated by ATP to form Pro-AMP and then transferred to the acceptor end of tRNA(Pro). As ProRS can inadvertently accommodate and process non-cognate amino acids such as alanine and cysteine, to avoid such errors it has two additional distinct editing activities against alanine. One activity is designated as 'pretransfer' editing and involves the tRNA(Pro)-independent hydrolysis of activated Ala-AMP. The other activity is designated 'posttransfer' editing and involves deacylation of mischarged Ala-tRNA(Pro). The misacylated Cys-tRNA(Pro) is not edited by ProRS. This is Proline--tRNA ligase 1 from Clostridioides difficile (strain 630) (Peptoclostridium difficile).